The primary structure comprises 177 residues: Bifunctional protein PyrR (177 aa).

The PRPP-binding signature appears at 99–111; that stretch reads VVLVDDVLFTGRT.

The protein belongs to the purine/pyrimidine phosphoribosyltransferase family. PyrR subfamily.

The catalysed reaction is UMP + diphosphate = 5-phospho-alpha-D-ribose 1-diphosphate + uracil. Its function is as follows. Regulates the transcription of the pyrimidine nucleotide (pyr) operon in response to exogenous pyrimidines. Also displays a weak uracil phosphoribosyltransferase activity which is not physiologically significant. The protein is Bifunctional protein PyrR of Geobacter sp. (strain M21).